The primary structure comprises 529 residues: Peptide chain release factor 3 (529 aa).

The 270-residue stretch at 11–280 (AKRRTFAIIS…GLVEWAPAPM (270 aa)) folds into the tr-type G domain. Residues 20–27 (SHPDAGKT), 88–92 (DTPGH), and 142–145 (NKLD) each bind GTP.

The protein belongs to the TRAFAC class translation factor GTPase superfamily. Classic translation factor GTPase family. PrfC subfamily.

The protein resides in the cytoplasm. Functionally, increases the formation of ribosomal termination complexes and stimulates activities of RF-1 and RF-2. It binds guanine nucleotides and has strong preference for UGA stop codons. It may interact directly with the ribosome. The stimulation of RF-1 and RF-2 is significantly reduced by GTP and GDP, but not by GMP. The protein is Peptide chain release factor 3 of Shigella dysenteriae serotype 1 (strain Sd197).